The chain runs to 263 residues: Proteasome subunit alpha type-1 (263 aa).

Methionine 1 is modified (N-acetylmethionine). The residue at position 110 (serine 110) is a Phosphoserine; alternate. A glycan (O-linked (GlcNAc) serine; alternate) is linked at serine 110. Lysine 115 is covalently cross-linked (Glycyl lysine isopeptide (Lys-Gly) (interchain with G-Cter in ubiquitin)). The residue at position 177 (serine 177) is a Phosphoserine. A Glycyl lysine isopeptide (Lys-Gly) (interchain with G-Cter in ubiquitin) cross-link involves residue lysine 208. The segment at 232–263 (FLEGLEERPQRKAQPAQPADEPAEKADEPMEH) is disordered. A compositionally biased stretch (basic and acidic residues) spans 253–263 (PAEKADEPMEH).

The protein belongs to the peptidase T1A family. As to quaternary structure, the 26S proteasome consists of a 20S proteasome core and two 19S regulatory subunits. The 20S proteasome core is a barrel-shaped complex made of 28 subunits that are arranged in four stacked rings. The two outer rings are each formed by seven alpha subunits, and the two inner rings are formed by seven beta subunits. The proteolytic activity is exerted by three beta-subunits PSMB5, PSMB6 and PSMB7. Interacts with NOTCH3. Interacts with ZFAND1.

The protein localises to the cytoplasm. It is found in the nucleus. In terms of biological role, component of the 20S core proteasome complex involved in the proteolytic degradation of most intracellular proteins. This complex plays numerous essential roles within the cell by associating with different regulatory particles. Associated with two 19S regulatory particles, forms the 26S proteasome and thus participates in the ATP-dependent degradation of ubiquitinated proteins. The 26S proteasome plays a key role in the maintenance of protein homeostasis by removing misfolded or damaged proteins that could impair cellular functions, and by removing proteins whose functions are no longer required. Associated with the PA200 or PA28, the 20S proteasome mediates ubiquitin-independent protein degradation. This type of proteolysis is required in several pathways including spermatogenesis (20S-PA200 complex) or generation of a subset of MHC class I-presented antigenic peptides (20S-PA28 complex). This is Proteasome subunit alpha type-1 from Homo sapiens (Human).